A 647-amino-acid polypeptide reads, in one-letter code: Nucleolar GTP-binding protein 1 (647 aa).

Residues 168-340 form the OBG-type G domain; sequence RTLLICGYPN…VRNKACEKLL (173 aa). GTP-binding positions include 174–181, 220–224, and 288–291; these read GYPNVGKS, DTPGI, and NKTD. S563 carries the post-translational modification Phosphoserine. The tract at residues 594–647 is disordered; it reads ADGSMRSKADRMAKMERRERNRHAKQGESDRHNAVSLSKHLFSGKRGVGKTDFR. Over residues 598–626 the composition is skewed to basic and acidic residues; the sequence is MRSKADRMAKMERRERNRHAKQGESDRHN.

Belongs to the TRAFAC class OBG-HflX-like GTPase superfamily. OBG GTPase family. NOG subfamily. Associated with nucleolar and cytoplasmic pre-60S particles. Directly interacts with RLP24.

The protein resides in the nucleus. It is found in the nucleolus. Its function is as follows. Involved in the biogenesis of the 60S ribosomal subunit. The protein is Nucleolar GTP-binding protein 1 (NOG1) of Saccharomyces cerevisiae (strain ATCC 204508 / S288c) (Baker's yeast).